The primary structure comprises 348 residues: Delta(6)-protoilludene synthase 18 (348 aa).

Asp-87, Asn-223, Ser-227, and Glu-231 together coordinate Mg(2+). Residues 87 to 91 carry the DDXXD motif motif; the sequence is DEYTD. The NSE/DTE motif motif lies at 223–231; sequence NDLVSYNRE. Residues Arg-311 and Tyr-312 each contribute to the (2E,6E)-farnesyl diphosphate site.

This sequence belongs to the terpene synthase family. The cofactor is Mg(2+).

The catalysed reaction is (2E,6E)-farnesyl diphosphate = Delta(6)-protoilludene + diphosphate. Terpene cyclase that catalyzes the cyclization of farnesyl diphosphate (FPP) to delta(6)-protoilludene. The polypeptide is Delta(6)-protoilludene synthase 18 (Postia placenta (strain ATCC 44394 / Madison 698-R) (Brown rot fungus)).